Consider the following 81-residue polypeptide: Photosystem I iron-sulfur center (81 aa).

4Fe-4S ferredoxin-type domains lie at 2 to 31 and 39 to 68; these read SHAV…MVPW and IASS…IRVY. Residues cysteine 11, cysteine 14, cysteine 17, cysteine 21, cysteine 48, cysteine 51, cysteine 54, and cysteine 58 each contribute to the [4Fe-4S] cluster site.

As to quaternary structure, the cyanobacterial PSI reaction center is composed of one copy each of PsaA,B,C,D,E,F,I,J,K,L,M and X, and forms trimeric complexes. [4Fe-4S] cluster is required as a cofactor.

The protein localises to the cellular thylakoid membrane. The catalysed reaction is reduced [plastocyanin] + hnu + oxidized [2Fe-2S]-[ferredoxin] = oxidized [plastocyanin] + reduced [2Fe-2S]-[ferredoxin]. Apoprotein for the two 4Fe-4S centers FA and FB of photosystem I (PSI); essential for photochemical activity. FB is the terminal electron acceptor of PSI, donating electrons to ferredoxin. The C-terminus interacts with PsaA/B/D and helps assemble the protein into the PSI complex. Required for binding of PsaD and PsaE to PSI. PSI is a plastocyanin/cytochrome c6-ferredoxin oxidoreductase, converting photonic excitation into a charge separation, which transfers an electron from the donor P700 chlorophyll pair to the spectroscopically characterized acceptors A0, A1, FX, FA and FB in turn. The sequence is that of Photosystem I iron-sulfur center from Prochlorococcus marinus (strain MIT 9312).